Consider the following 235-residue polypeptide: MQKQEKIIEMFNQIAPTYDKANRILSFGADVAWRKKACQRVMSLYLKKDLKIADIACGTGDMIEIWQESALKMEKNILNIKGIDPSSGMLNVAKEKFPNVEFIEAGAQNLPLESQSLDILSISYGIRNVVERQKALSEFARVLQKDGILVVLEFTKREKGGFIAACRDFYLKNILPSIGGIISKNKSAYEYLPNSIEGFLSKEEFILELKNAGFEILDYKSFSFGVSSMFIAKKL.

3 residues coordinate S-adenosyl-L-methionine: threonine 59, aspartate 84, and serine 123.

The protein belongs to the class I-like SAM-binding methyltransferase superfamily. MenG/UbiE family.

It carries out the reaction a 2-demethylmenaquinol + S-adenosyl-L-methionine = a menaquinol + S-adenosyl-L-homocysteine + H(+). The catalysed reaction is a 2-methoxy-6-(all-trans-polyprenyl)benzene-1,4-diol + S-adenosyl-L-methionine = a 5-methoxy-2-methyl-3-(all-trans-polyprenyl)benzene-1,4-diol + S-adenosyl-L-homocysteine + H(+). Its pathway is quinol/quinone metabolism; menaquinone biosynthesis; menaquinol from 1,4-dihydroxy-2-naphthoate: step 2/2. It functions in the pathway cofactor biosynthesis; ubiquinone biosynthesis. Functionally, methyltransferase required for the conversion of demethylmenaquinol (DMKH2) to menaquinol (MKH2) and the conversion of 2-polyprenyl-6-methoxy-1,4-benzoquinol (DDMQH2) to 2-polyprenyl-3-methyl-6-methoxy-1,4-benzoquinol (DMQH2). In Campylobacter jejuni subsp. jejuni serotype O:23/36 (strain 81-176), this protein is Ubiquinone/menaquinone biosynthesis C-methyltransferase UbiE.